The chain runs to 443 residues: Ribosomal protein uS12 methylthiotransferase RimO (443 aa).

The MTTase N-terminal domain maps to 8–118; sequence PKVGFVSLGC…VVNAVHEVVP (111 aa). Residues Cys17, Cys53, Cys82, Cys151, Cys155, and Cys158 each coordinate [4Fe-4S] cluster. Residues 137 to 376 enclose the Radical SAM core domain; the sequence is LTPRHYAYLK…AHQQAISSAR (240 aa). The TRAM domain maps to 378–443; that stretch reads QLRIGKEIEV…DEYDMWAEPV (66 aa).

It belongs to the methylthiotransferase family. RimO subfamily. [4Fe-4S] cluster serves as cofactor.

The protein localises to the cytoplasm. It catalyses the reaction L-aspartate(89)-[ribosomal protein uS12]-hydrogen + (sulfur carrier)-SH + AH2 + 2 S-adenosyl-L-methionine = 3-methylsulfanyl-L-aspartate(89)-[ribosomal protein uS12]-hydrogen + (sulfur carrier)-H + 5'-deoxyadenosine + L-methionine + A + S-adenosyl-L-homocysteine + 2 H(+). Functionally, catalyzes the methylthiolation of an aspartic acid residue of ribosomal protein uS12. The polypeptide is Ribosomal protein uS12 methylthiotransferase RimO (Pseudomonas putida (strain W619)).